Consider the following 560-residue polypeptide: Chaperonin GroEL 2 (560 aa).

ATP contacts are provided by residues 29 to 32 (TLGP), lysine 50, 86 to 90 (DGTTT), glycine 414, and aspartate 494. A disordered region spans residues 524 to 546 (EDEDDDDGGGGGGGGMPAGGAGG). The span at 532 to 546 (GGGGGGGMPAGGAGG) shows a compositional bias: gly residues.

This sequence belongs to the chaperonin (HSP60) family. In terms of assembly, forms a cylinder of 14 subunits composed of two heptameric rings stacked back-to-back. Interacts with the co-chaperonin GroES.

It localises to the cytoplasm. It catalyses the reaction ATP + H2O + a folded polypeptide = ADP + phosphate + an unfolded polypeptide.. In terms of biological role, together with its co-chaperonin GroES, plays an essential role in assisting protein folding. The GroEL-GroES system forms a nano-cage that allows encapsulation of the non-native substrate proteins and provides a physical environment optimized to promote and accelerate protein folding. This is Chaperonin GroEL 2 from Salinibacter ruber (strain DSM 13855 / M31).